The following is a 156-amino-acid chain: Small ribosomal subunit protein uS7 (156 aa).

It belongs to the universal ribosomal protein uS7 family. Part of the 30S ribosomal subunit. Contacts proteins S9 and S11.

In terms of biological role, one of the primary rRNA binding proteins, it binds directly to 16S rRNA where it nucleates assembly of the head domain of the 30S subunit. Is located at the subunit interface close to the decoding center, probably blocks exit of the E-site tRNA. The sequence is that of Small ribosomal subunit protein uS7 from Dichelobacter nodosus (strain VCS1703A).